The following is a 579-amino-acid chain: ERV-BabFcenv provirus ancestral Env polyprotein (579 aa).

The first 22 residues, 1-22 (MISAVLNLPSTPLLPLLWFTLI), serve as a signal peptide directing secretion. The interval 23 to 387 (IPASLTNPKF…LSSSNNIQKQ (365 aa)) is surface protein. Over 23-523 (IPASLTNPKF…VWLLPVVQQM (501 aa)) the chain is Extracellular. Residues asparagine 135, asparagine 203, asparagine 242, and asparagine 251 are each glycosylated (N-linked (GlcNAc...) asparagine). The CXXC motif lies at 255–258 (CFLC). 3 N-linked (GlcNAc...) asparagine glycosylation sites follow: asparagine 276, asparagine 312, and asparagine 337. A fusion peptide region spans residues 388–408 (AVFLPLIIGVSLASSLVASGL). Residues 388–579 (AVFLPLIIGV…LPTSDPNYAP (192 aa)) are transmembrane protein. Residues 453–469 (AQNRRALDLLTAEKGGT) carry the CKS-17 motif. A disulfide bridge links cysteine 470 with cysteine 477. A CX6CC motif is present at residues 470-478 (CLFLGEECC). Asparagine 482 is a glycosylation site (N-linked (GlcNAc...) asparagine). The helical transmembrane segment at 524 to 544 (LPFLIPILILCLMLCLAPILI) threads the bilayer. Residues 545-579 (KFLRARVQEITRVTFNQMLLHPYTQLPTSDPNYAP) are Cytoplasmic-facing.

Belongs to the gamma type-C retroviral envelope protein family. HERV class-I F(c)1 env subfamily. Specific enzymatic cleavages in vivo yield the mature SU and TM proteins. In terms of processing, the CXXC motif is highly conserved across a broad range of retroviral envelope proteins. It is thought to participate in the formation of a labile disulfide bond possibly with the CX6CC motif present in the transmembrane domain.

It localises to the cell membrane. Its function is as follows. Retroviral envelope proteins mediate receptor recognition and membrane fusion during early infection. Endogenous envelope proteins may have kept, lost or modified their original function during evolution. This chain is ERV-BabFcenv provirus ancestral Env polyprotein, found in Papio anubis (Olive baboon).